The chain runs to 154 residues: Endoribonuclease YbeY (154 aa).

Zn(2+)-binding residues include His118, His122, and His128.

This sequence belongs to the endoribonuclease YbeY family. Zn(2+) serves as cofactor.

The protein resides in the cytoplasm. Functionally, single strand-specific metallo-endoribonuclease involved in late-stage 70S ribosome quality control and in maturation of the 3' terminus of the 16S rRNA. The chain is Endoribonuclease YbeY from Chloroflexus aurantiacus (strain ATCC 29366 / DSM 635 / J-10-fl).